Reading from the N-terminus, the 506-residue chain is BTB/POZ domain and ankyrin repeat-containing protein NPR5 (506 aa).

The region spanning 23–131 (SDVTFSVEGR…LYSGQVSLVP (109 aa)) is the BTB domain. Residues 137 to 151 (RPGCGERGCWHTHCA) form a C2HC NPR-type zinc finger. Cysteine 140, cysteine 145, histidine 147, and cysteine 150 together coordinate Zn(2+). 4 ANK repeats span residues 278-306 (HKIR…GLNL), 307-337 (DDAL…DVNH), 342-371 (AGKT…DPNV), and 375-409 (DGVT…KLRL). Residues 481–506 (KMNDGGDGDDGGSRGPSSLFSPHGFP) are disordered.

The protein belongs to the plant 'ANKYRIN-BTB/POZ' family. 'NOOT-BOP-COCH-like' (NBCL) subfamily. As to quaternary structure, homodimer. Interacts with TGAL5, TGAL7, TGAL8 and TGAL11.

Its subcellular location is the nucleus. It localises to the cytoplasm. The protein operates within protein modification; protein ubiquitination. Its function is as follows. May act as a substrate-specific adapter of an E3 ubiquitin-protein ligase complex (CUL3-RBX1-BTB) which mediates the ubiquitination and subsequent proteasomal degradation of target proteins. Transcriptional co-regulator involved in the promotion of leaf and floral meristem fate and determinacy. Required for the abscission of senescent organs, probably by regulating the cell wall disorganization in abscission zones (AZs, e.g. pulvini at the base of leaves). Maybe involved in defense response against pathogens. In Oryza sativa subsp. japonica (Rice), this protein is BTB/POZ domain and ankyrin repeat-containing protein NPR5.